Here is a 196-residue protein sequence, read N- to C-terminus: Molybdenum cofactor guanylyltransferase (196 aa).

GTP is bound by residues 10–12, Lys23, Asn51, Asp69, and Asp99; that span reads LAG. A Mg(2+)-binding site is contributed by Asp99.

Belongs to the MobA family. In terms of assembly, monomer. Mg(2+) is required as a cofactor.

It localises to the cytoplasm. The catalysed reaction is Mo-molybdopterin + GTP + H(+) = Mo-molybdopterin guanine dinucleotide + diphosphate. In terms of biological role, transfers a GMP moiety from GTP to Mo-molybdopterin (Mo-MPT) cofactor (Moco or molybdenum cofactor) to form Mo-molybdopterin guanine dinucleotide (Mo-MGD) cofactor. This Shewanella loihica (strain ATCC BAA-1088 / PV-4) protein is Molybdenum cofactor guanylyltransferase.